The following is a 128-amino-acid chain: NADH-quinone oxidoreductase subunit A (128 aa).

3 consecutive transmembrane segments (helical) span residues 5-25 (IPILVLAALAAAFAVVSVVIA), 72-92 (LTAMLFIVFDIEIVFLYPWAV), and 100-120 (FALVEMAIFMLTVFVAYAYVW).

Belongs to the complex I subunit 3 family. In terms of assembly, NDH-1 is composed of 14 different subunits. Subunits NuoA, H, J, K, L, M, N constitute the membrane sector of the complex.

The protein resides in the cell membrane. It carries out the reaction a quinone + NADH + 5 H(+)(in) = a quinol + NAD(+) + 4 H(+)(out). Its function is as follows. NDH-1 shuttles electrons from NADH, via FMN and iron-sulfur (Fe-S) centers, to quinones in the respiratory chain. The immediate electron acceptor for the enzyme in this species is believed to be a menaquinone. Couples the redox reaction to proton translocation (for every two electrons transferred, four hydrogen ions are translocated across the cytoplasmic membrane), and thus conserves the redox energy in a proton gradient. The chain is NADH-quinone oxidoreductase subunit A from Mycobacterium bovis (strain ATCC BAA-935 / AF2122/97).